The following is a 256-amino-acid chain: HTH-type transcriptional regulator PrtR (256 aa).

The 54-residue stretch at 16–69 (LKQAMAMRNLKQETLAEAAGVSQNTIHKLTSGKAQSTRKLIEIAAALGVSPVWL) folds into the HTH cro/C1-type domain. The H-T-H motif DNA-binding region spans 27–46 (QETLAEAAGVSQNTIHKLTS).

Functionally, represses the promoter activity of the prtN gene. This Pseudomonas aeruginosa (strain ATCC 15692 / DSM 22644 / CIP 104116 / JCM 14847 / LMG 12228 / 1C / PRS 101 / PAO1) protein is HTH-type transcriptional regulator PrtR (prtR).